Here is a 478-residue protein sequence, read N- to C-terminus: ATP synthase subunit beta (478 aa).

161-168 lines the ATP pocket; sequence GGAGVGKT.

This sequence belongs to the ATPase alpha/beta chains family. F-type ATPases have 2 components, CF(1) - the catalytic core - and CF(0) - the membrane proton channel. CF(1) has five subunits: alpha(3), beta(3), gamma(1), delta(1), epsilon(1). CF(0) has four main subunits: a(1), b(1), b'(1) and c(9-12).

The protein localises to the cell inner membrane. The enzyme catalyses ATP + H2O + 4 H(+)(in) = ADP + phosphate + 5 H(+)(out). Its function is as follows. Produces ATP from ADP in the presence of a proton gradient across the membrane. The catalytic sites are hosted primarily by the beta subunits. The chain is ATP synthase subunit beta from Gloeobacter violaceus (strain ATCC 29082 / PCC 7421).